The primary structure comprises 325 residues: MKTLWKVLKIVFVSLAALVLLVSVSVFIYHHFQLNKEAALLKGKGTVVDVDGKKMNVYQEGSGKDTFVFMSGSGIAAPAYEMKGLYSKFSKENKIAVVDRAGYGYSEVSHDDRDIDTVLEQTRKALMKSGNKPPYILMPHSISGIEAMYWAQKYPKEIKAIIAMDIGLPQQYVTYKLSGVDRLKVRGFHLLTSIGFHRFIPSAVYNPEVIRQSFLTDEEKEIYKAINFKQFFNADMEHELLQSYQNGSKSVNLPAPKETPVLILDAVSDQNRHSKYAIQNRKDYEAFAAQFNTADIKELRGTHSIYLYQPDQIYKLSMEFMRKVR.

A helical transmembrane segment spans residues 10 to 30; it reads IVFVSLAALVLLVSVSVFIYH. The region spanning 94 to 166 is the AB hydrolase-1 domain; sequence KIAVVDRAGY…EIKAIIAMDI (73 aa).

The protein localises to the cell membrane. This is an uncharacterized protein from Bacillus subtilis (strain 168).